Reading from the N-terminus, the 403-residue chain is Argininosuccinate synthase (403 aa).

ATP contacts are provided by residues 10–18 and Ala-37; that span reads AYSGGLDTS. Positions 88 and 93 each coordinate L-citrulline. Position 118 (Gly-118) interacts with ATP. L-aspartate-binding residues include Thr-120, Asn-124, and Asp-125. L-citrulline is bound at residue Asn-124. L-citrulline contacts are provided by Arg-128, Ser-178, Ser-187, Glu-263, and Tyr-275.

Belongs to the argininosuccinate synthase family. Type 1 subfamily. As to quaternary structure, homotetramer.

It is found in the cytoplasm. It carries out the reaction L-citrulline + L-aspartate + ATP = 2-(N(omega)-L-arginino)succinate + AMP + diphosphate + H(+). Its pathway is amino-acid biosynthesis; L-arginine biosynthesis; L-arginine from L-ornithine and carbamoyl phosphate: step 2/3. This is Argininosuccinate synthase from Marinobacter nauticus (strain ATCC 700491 / DSM 11845 / VT8) (Marinobacter aquaeolei).